A 506-amino-acid chain; its full sequence is MDHREKSDRRLLLWFFAVATAVKLLLIPSSRSTDFEVHRNWLAITNSLPLTKWYFDETSQWTLDYPPFFAYFERFLSIFARLVDPRIVDLQSGLDYNAESVIYFQRISVIVSDLCLLYGVYRLTRKLEPLKRNLICALVIWSPGLLIVDHIHFQYNGFLLGWLLLSISFLQEGRDLLGGFLFAVLLCFKHLFAVTAPVYFVYLLRHYCWSGLVTGFRRLVTIGAVVVAVFAAAYGPFIYHGQIQQVISRMFPFGRGLCHAYWAPNFWVFYIILDKGLAVLLRKLGYEIQIPSASFTGGLVGDSSPFAVLPQITPLTTFAMVLLAISPCLIKAWKKPHSGLVARWVAYAYTCGFLFGWHVHEKASLHFTIPLAIVAVQSLEDAKHYFLVSIVSCYSLYPLLYEPQEYPIKVLLLLLHSVVMWLGFAAQYTDYKAQKKETSEIKSKFRIGCFEKSYLMGLIIVEIVSQFLHPYFLGDKLPFLPLMLISTYCTVGIMYSWIWQLRKILT.

12 helical membrane-spanning segments follow: residues 10-30 (RLLL…IPSS), 101-121 (VIYF…YGVY), 133-153 (NLIC…HIHF), 176-196 (LLGG…AVTA), 219-239 (LVTI…PFIY), 261-281 (YWAP…AVLL), 305-325 (PFAV…LLAI), 339-359 (GLVA…GWHV), 384-401 (HYFL…PLLY), 406-426 (YPIK…GFAA), 454-474 (YLMG…YFLG), and 479-499 (FLPL…SWIW).

This sequence belongs to the ALG6/ALG8 glucosyltransferase family.

The protein localises to the endoplasmic reticulum membrane. It catalyses the reaction an alpha-D-Glc-(1-&gt;3)-alpha-D-Man-(1-&gt;2)-alpha-D-Man-(1-&gt;2)-alpha-D-Man-(1-&gt;3)-[alpha-D-Man-(1-&gt;2)-alpha-D-Man-(1-&gt;3)-[alpha-D-Man-(1-&gt;2)-alpha-D-Man-(1-&gt;6)]-alpha-D-Man-(1-&gt;6)]-beta-D-Man-(1-&gt;4)-beta-D-GlcNAc-(1-&gt;4)-alpha-D-GlcNAc-diphospho-di-trans,poly-cis-dolichol + a di-trans,poly-cis-dolichyl beta-D-glucosyl phosphate = an alpha-D-Glc-(1-&gt;3)-alpha-D-Glc-(1-&gt;3)-alpha-D-Man-(1-&gt;2)-alpha-D-Man-(1-&gt;2)-alpha-D-Man-(1-&gt;3)-[alpha-D-Man-(1-&gt;2)-alpha-D-Man-(1-&gt;3)-[alpha-D-Man-(1-&gt;2)-alpha-D-Man-(1-&gt;6)]-alpha-D-Man-(1-&gt;6)]-beta-D-Man-(1-&gt;4)-beta-D-GlcNAc-(1-&gt;4)-alpha-D-GlcNAc-diphospho-di-trans,poly-cis-dolichol + a di-trans,poly-cis-dolichyl phosphate + H(+). The protein operates within protein modification; protein glycosylation. Dolichyl pyrophosphate Glc1Man9GlcNAc2 alpha-1,3-glucosyltransferase that operates in the biosynthetic pathway of dolichol-linked oligosaccharides, the glycan precursors employed in protein asparagine (N)-glycosylation. The assembly of dolichol-linked oligosaccharides begins on the cytosolic side of the endoplasmic reticulum membrane and finishes in its lumen. The sequential addition of sugars to dolichol pyrophosphate produces dolichol-linked oligosaccharides containing fourteen sugars, including two GlcNAcs, nine mannoses and three glucoses. Once assembled, the oligosaccharide is transferred from the lipid to nascent proteins by oligosaccharyltransferases. In the lumen of the endoplasmic reticulum, adds the second glucose residue from dolichyl phosphate glucose (Dol-P-Glc) onto the lipid-linked oligosaccharide intermediate Glc(1)Man(9)GlcNAc(2)-PP-Dol to produce Glc(2)Man(9)GlcNAc(2)-PP-Dol. The protein is Dolichyl pyrophosphate Glc1Man9GlcNAc2 alpha-1,3-glucosyltransferase of Arabidopsis thaliana (Mouse-ear cress).